A 253-amino-acid chain; its full sequence is Acetylglutamate kinase (253 aa).

Residues 40 to 41 (GG), arginine 62, and asparagine 154 each bind substrate.

This sequence belongs to the acetylglutamate kinase family. ArgB subfamily.

It localises to the cytoplasm. The enzyme catalyses N-acetyl-L-glutamate + ATP = N-acetyl-L-glutamyl 5-phosphate + ADP. It participates in amino-acid biosynthesis; L-arginine biosynthesis; N(2)-acetyl-L-ornithine from L-glutamate: step 2/4. In terms of biological role, catalyzes the ATP-dependent phosphorylation of N-acetyl-L-glutamate. This Staphylococcus saprophyticus subsp. saprophyticus (strain ATCC 15305 / DSM 20229 / NCIMB 8711 / NCTC 7292 / S-41) protein is Acetylglutamate kinase.